A 208-amino-acid polypeptide reads, in one-letter code: MIGLVGRKVGMTRIFTEEGVSIPVTVIEIEANRVTQVKTLENDGYSAVQVTTGSKKASRVTKPEAGHFVKAGVEAGRGLWEFRTEGEEFTLGQEINVDIFADVKKVDVTGTSKGKGFQGGVKRWNFRTQDATHGNSLSHRVLGSIGQNQTPGRVFKGKKMAGHLGAERVTVQSLEVVRVDAERKLLLVKGAVPGATNSDVIVKPAVKA.

The residue at position 149 (Gln-149) is an N5-methylglutamine.

Belongs to the universal ribosomal protein uL3 family. As to quaternary structure, part of the 50S ribosomal subunit. Forms a cluster with proteins L14 and L19. Post-translationally, methylated by PrmB.

One of the primary rRNA binding proteins, it binds directly near the 3'-end of the 23S rRNA, where it nucleates assembly of the 50S subunit. In Mannheimia succiniciproducens (strain KCTC 0769BP / MBEL55E), this protein is Large ribosomal subunit protein uL3.